Here is a 254-residue protein sequence, read N- to C-terminus: MNTNTPAHPPEGAPLSEATQAALASAEHAPDSPGATHIRSFVHRRGHITQRQRDALEQLMGKWSVPYAPRPLDMAATFGRQAPTILEIGFGMGETTEKIALARPGDNFLGVEVFNAGVGSLLHRIEESAIANLRIVQHDAVEVVRDMIAPDSLAGVHVYFPDPWPKKRHHKRRLLQPPFVALLASRLAPGGYLHCATDWEDYAVQMLEVLGGEPLLRNTADGYAPRPDFRPQTKFETRGLRLGHGVWDLMFKRA.

Residues 1–34 form a disordered region; the sequence is MNTNTPAHPPEGAPLSEATQAALASAEHAPDSPG. 4 residues coordinate S-adenosyl-L-methionine: Glu-87, Glu-112, Asp-139, and Asp-162. Residue Asp-162 is part of the active site. Substrate contacts are provided by residues Lys-166, Asp-198, and 233-236; that span reads TKFE.

It belongs to the class I-like SAM-binding methyltransferase superfamily. TrmB family.

The enzyme catalyses guanosine(46) in tRNA + S-adenosyl-L-methionine = N(7)-methylguanosine(46) in tRNA + S-adenosyl-L-homocysteine. It functions in the pathway tRNA modification; N(7)-methylguanine-tRNA biosynthesis. Catalyzes the formation of N(7)-methylguanine at position 46 (m7G46) in tRNA. The sequence is that of tRNA (guanine-N(7)-)-methyltransferase from Bordetella bronchiseptica (strain ATCC BAA-588 / NCTC 13252 / RB50) (Alcaligenes bronchisepticus).